The primary structure comprises 55 residues: Large ribosomal subunit protein bL33 (55 aa).

Residues 1 to 11 (MAKSGRDKIKL) are compositionally biased toward basic and acidic residues. Residues 1–27 (MAKSGRDKIKLESTAGTGHFYTTTKNK) are disordered. The segment covering 14-24 (TAGTGHFYTTT) has biased composition (polar residues).

Belongs to the bacterial ribosomal protein bL33 family.

This is Large ribosomal subunit protein bL33 from Herminiimonas arsenicoxydans.